We begin with the raw amino-acid sequence, 211 residues long: Dual specificity protein phosphatase 26 (211 aa).

Residues 60-207 enclose the Tyrosine-protein phosphatase domain; it reads NHADEVWPGL…LLALDRRLRQ (148 aa). Catalysis depends on Cys-152, which acts as the Phosphocysteine intermediate.

This sequence belongs to the protein-tyrosine phosphatase family. Non-receptor class dual specificity subfamily. As to quaternary structure, interacts with HSF4. As to expression, brain and skeletal muscle. In the brain it is expressed ubiquitously except in the hippocampus.

The protein localises to the cytoplasm. The protein resides in the nucleus. It is found in the golgi apparatus. It catalyses the reaction O-phospho-L-tyrosyl-[protein] + H2O = L-tyrosyl-[protein] + phosphate. The enzyme catalyses O-phospho-L-seryl-[protein] + H2O = L-seryl-[protein] + phosphate. The catalysed reaction is O-phospho-L-threonyl-[protein] + H2O = L-threonyl-[protein] + phosphate. Functionally, inactivates MAPK1 and MAPK3 which leads to dephosphorylation of heat shock factor protein 4 and a reduction in its DNA-binding activity. In Mus musculus (Mouse), this protein is Dual specificity protein phosphatase 26 (Dusp26).